Reading from the N-terminus, the 251-residue chain is Dihydroorotate dehydrogenase B (NAD(+)), electron transfer subunit homolog (251 aa).

The region spanning 2–101 is the FAD-binding FR-type domain; the sequence is LAELNAEVLE…FLPLGKRLFS (100 aa). The [2Fe-2S] cluster site is built by cysteine 217, cysteine 222, cysteine 225, and cysteine 238.

The protein belongs to the PyrK family. [2Fe-2S] cluster serves as cofactor. The cofactor is FAD.

The chain is Dihydroorotate dehydrogenase B (NAD(+)), electron transfer subunit homolog from Aquifex aeolicus (strain VF5).